A 373-amino-acid chain; its full sequence is Queuine tRNA-ribosyltransferase (373 aa).

Asp89 acts as the Proton acceptor in catalysis. Residues 89-93 (DSGGF), Asp143, Gln185, and Gly212 contribute to the substrate site. An RNA binding region spans residues 243-249 (GVGRPED). The active-site Nucleophile is the Asp262. The segment at 267 to 271 (TRNAR) is RNA binding; important for wobble base 34 recognition. Zn(2+)-binding residues include Cys300, Cys302, Cys305, and His331.

This sequence belongs to the queuine tRNA-ribosyltransferase family. As to quaternary structure, homodimer. Within each dimer, one monomer is responsible for RNA recognition and catalysis, while the other monomer binds to the replacement base PreQ1. The cofactor is Zn(2+).

The catalysed reaction is 7-aminomethyl-7-carbaguanine + guanosine(34) in tRNA = 7-aminomethyl-7-carbaguanosine(34) in tRNA + guanine. The protein operates within tRNA modification; tRNA-queuosine biosynthesis. In terms of biological role, catalyzes the base-exchange of a guanine (G) residue with the queuine precursor 7-aminomethyl-7-deazaguanine (PreQ1) at position 34 (anticodon wobble position) in tRNAs with GU(N) anticodons (tRNA-Asp, -Asn, -His and -Tyr). Catalysis occurs through a double-displacement mechanism. The nucleophile active site attacks the C1' of nucleotide 34 to detach the guanine base from the RNA, forming a covalent enzyme-RNA intermediate. The proton acceptor active site deprotonates the incoming PreQ1, allowing a nucleophilic attack on the C1' of the ribose to form the product. After dissociation, two additional enzymatic reactions on the tRNA convert PreQ1 to queuine (Q), resulting in the hypermodified nucleoside queuosine (7-(((4,5-cis-dihydroxy-2-cyclopenten-1-yl)amino)methyl)-7-deazaguanosine). The sequence is that of Queuine tRNA-ribosyltransferase from Marinobacter nauticus (strain ATCC 700491 / DSM 11845 / VT8) (Marinobacter aquaeolei).